The sequence spans 298 residues: Riboflavin transporter (298 aa).

The next 9 helical transmembrane spans lie at 8–28 (LQGA…NSVA), 35–55 (FGLP…VVIL), 79–99 (VFLA…PVPI), 101–121 (QGIA…GLWL), 125–145 (VGMA…IILE), 151–171 (FNLA…YSLM), 184–204 (MVVY…LPDW), 211–231 (TVWL…WAIA), and 258–278 (WLVF…IIVL). EamA domains are found at residues 10–144 (GALW…MIIL) and 156–284 (LLPV…AFIT).

This sequence belongs to the drug/metabolite transporter (DMT) superfamily. 10 TMS drug/metabolite exporter (DME) (TC 2.A.7.3) family.

The protein resides in the cell membrane. Transports riboflavin into the cell. The chain is Riboflavin transporter from Vibrio cholerae serotype O1 (strain ATCC 39315 / El Tor Inaba N16961).